The primary structure comprises 349 residues: DCD domain-containing protein NRP (349 aa).

The disordered stretch occupies residues 157–201 (NNNKNKGIDEDHQIQKGGKKNRKNQQNNNNQRNEDDKNNGLDKRF). The span at 188–201 (RNEDDKNNGLDKRF) shows a compositional bias: basic and acidic residues. Residues 214–346 (ETIGGYIFVC…VLSLLDIFAD (133 aa)) form the DCD domain.

As to quaternary structure, interacts with CRY2 in the cytoplasm. Interacts with Verticillium dahliae PevD1. Interacts with FYPP3. In terms of tissue distribution, highly expressed in sensecent leaves, cauline leaves and sepals. Expressed in the shoot apical meristem, leaf veins, central cylinder, root hair zone, root tips, rosette leaves, flowers and siliques.

The protein localises to the cytoplasm. Its function is as follows. Contributes to the initial phase of responses to abiotic and biotic stress signals. Binds FYPP3 and facilitates FYPP3 degradation to promote abscisic acid (ABA) response. This chain is DCD domain-containing protein NRP, found in Arabidopsis thaliana (Mouse-ear cress).